The chain runs to 138 residues: Acyl carrier protein 1, chloroplastic (138 aa).

The N-terminal 56 residues, 1–56, are a transit peptide targeting the chloroplast; that stretch reads MASLSATTTVRVQPSSSSLHKLSQGNGRCSSIVCLDWGKSSFPTLRTSRRRSFISA. The 76-residue stretch at 59–134 folds into the Carrier domain; it reads KETIDKVCDI…QAADVIESLL (76 aa). An O-(pantetheine 4'-phosphoryl)serine modification is found at S94.

Belongs to the acyl carrier protein (ACP) family. 4'-phosphopantetheine is transferred from CoA to a specific serine of apo-ACP by acpS. This modification is essential for activity because fatty acids are bound in thioester linkage to the sulfhydryl of the prosthetic group.

The protein resides in the plastid. It localises to the chloroplast. Its pathway is lipid metabolism; fatty acid biosynthesis. Its function is as follows. Carrier of the growing fatty acid chain in fatty acid biosynthesis. The polypeptide is Acyl carrier protein 1, chloroplastic (ACL1.1) (Spinacia oleracea (Spinach)).